A 132-amino-acid polypeptide reads, in one-letter code: NADPH-dependent 7-cyano-7-deazaguanine reductase (132 aa).

The active-site Thioimide intermediate is the Cys-34. Residue Asp-41 is the Proton donor of the active site. Substrate contacts are provided by residues 56-58 (IEL) and 75-76 (HE).

The protein belongs to the GTP cyclohydrolase I family. QueF type 1 subfamily.

The protein localises to the cytoplasm. The catalysed reaction is 7-aminomethyl-7-carbaguanine + 2 NADP(+) = 7-cyano-7-deazaguanine + 2 NADPH + 3 H(+). Its pathway is tRNA modification; tRNA-queuosine biosynthesis. Its function is as follows. Catalyzes the NADPH-dependent reduction of 7-cyano-7-deazaguanine (preQ0) to 7-aminomethyl-7-deazaguanine (preQ1). This chain is NADPH-dependent 7-cyano-7-deazaguanine reductase, found in Vesicomyosocius okutanii subsp. Calyptogena okutanii (strain HA).